The primary structure comprises 1041 residues: Toll-like receptor 8 (1041 aa).

Positions 1–26 (MENMFLQSSMLTCIFLLISGSCELCA) are cleaved as a signal peptide. The Extracellular portion of the chain corresponds to 27-827 (EENFSRSYPC…ELTTCVSDVT (801 aa)). 5 N-linked (GlcNAc...) asparagine glycosylation sites follow: Asn-29, Asn-42, Asn-80, Asn-88, and Asn-115. A disulfide bridge links Cys-36 with Cys-49. LRR repeat units follow at residues 126-147 (NLRE…LPES), 148-168 (LTEL…GISR), 171-193 (NLKN…TNIE), 202-223 (NLEL…LPSS), 224-244 (LRKL…DFKG), and 247-268 (NLTL…FPCV). Asn-160 carries N-linked (GlcNAc...) asparagine glycosylation. A disulfide bridge links Cys-181 with Cys-187. A glycan (N-linked (GlcNAc...) asparagine) is linked at Asn-247. Intrachain disulfides connect Cys-257–Cys-270 and Cys-260–Cys-267. Asn-285 and Asn-293 each carry an N-linked (GlcNAc...) asparagine glycan. LRR repeat units follow at residues 288–309 (QLRY…WFKN), 312–334 (HLKV…AFLT), and 338–360 (RLEI…INIS). Residues Asn-358 and Asn-362 are each glycosylated (N-linked (GlcNAc...) asparagine). LRR repeat units lie at residues 368 to 389 (SLRA…DFQP), 395 to 416 (NLST…LFQN), and 419 to 440 (NLEI…TRQS). N-linked (GlcNAc...) asparagine glycans are attached at residues Asn-395 and Asn-416. Asn-443 carries an N-linked (GlcNAc...) asparagine glycan. The cysteines at positions 479 and 509 are disulfide-linked. LRR repeat units lie at residues 482-503 (YGKA…QFEN), 506-527 (DIAC…TEFS), 531-551 (HVKY…SALT), and 555-577 (DLEV…THHL). N-linked (GlcNAc...) asparagine glycans are attached at residues Asn-511 and Asn-546. Asn-582 and Asn-590 each carry an N-linked (GlcNAc...) asparagine glycan. 7 LRR repeats span residues 585 to 606 (NLKV…YNLE), 609 to 630 (SLVE…DDNR), 640 to 661 (NLTR…AFLN), 665 to 685 (SLTE…TLLQ), 689 to 710 (RLEL…LSDF), 713 to 734 (SLRT…FLSE), and 737 to 758 (SLKH…ALET). N-linked (GlcNAc...) asparagine glycosylation is found at Asn-640 and Asn-680. Residue Asn-752 is glycosylated (N-linked (GlcNAc...) asparagine). The LRRCT domain occupies 772-824 (NPFECTCDIGDFRRWMDEHLNVKIPRLVDVICASPGDQRGKSIVSLELTTCVS). Cys-776 and Cys-803 are oxidised to a cystine. Residues 828–848 (AVILFFFTFFITTMVMLAALA) form a helical membrane-spanning segment. At 849–1041 (HHLFYWDVWF…NMYVDSIKQY (193 aa)) the chain is on the cytoplasmic side. The TIR domain occupies 878-1022 (TFYDAYISYD…LFWQTLRNVV (145 aa)).

Belongs to the Toll-like receptor family. As to quaternary structure, homodimer. Interacts with MYD88 via their respective TIR domains. Interacts with UNC93B1. Interacts with BTK. Interacts with SMPDL3B. Ubiquitinated by RNF216; leading to degradation by the proteasome. Post-translationally, proteolytic processing occurs in monocytes and monocyte-derived macrophages by both furin-like proprotein convertase and cathepsins. The cleavage is necessary for dimer formation and subsequent activation. As to expression, expressed in myeloid dendritic cells, monocytes, and monocyte-derived dendritic cells.

The protein localises to the endosome membrane. Its activity is regulated as follows. Activated by RNAs having enough uridines. Functionally, endosomal receptor that plays a key role in innate and adaptive immunity. Controls host immune response against pathogens through recognition of RNA degradation products specific to microorganisms that are initially processed by RNASET2. Recognizes GU-rich single-stranded RNA (GU-rich RNA) derived from SARS-CoV-2, SARS-CoV-1 and HIV-1 viruses. Upon binding to agonists, undergoes dimerization that brings TIR domains from the two molecules into direct contact, leading to the recruitment of TIR-containing downstream adapter MYD88 through homotypic interaction. In turn, the Myddosome signaling complex is formed involving IRAK4, IRAK1, TRAF6, TRAF3 leading to activation of downstream transcription factors NF-kappa-B and IRF7 to induce pro-inflammatory cytokines and interferons, respectively. The sequence is that of Toll-like receptor 8 from Homo sapiens (Human).